A 378-amino-acid polypeptide reads, in one-letter code: MQLPSFLDVYRGLISTSSISSSDPSWDQGNQAVIEKLSDWFAALGFDVDVTEVEPGKYNLLAQKGQGEGGLLLAGHSDTVPFDQGRWSFDPHQLTEKDNKFYGLGTADMKGFFAFIYEAAKRMDWKGQNKPLYVLATCDEETTMLGARHFSAHTPFKPDYCIIGEPTSLVPVRGHKGHVANVVRVTGKSGHSSDPSLGVNAIEIMHEVLFALMQLRDTLIKQYHNPGFAIPSPTLNLGHIHGGDSANRICGCCELHYDVRPLPGISLDGLDNLLRGALKEVEAKWPGRIEIVPLHEPIPGYECQHDHPFIHGIEELCGTPSQTVNYCTEAPFLQQLCPTLVLGPGSIDQAHQPDEFLAFDFIDPTIDVLSKAMRKYCF.

Histidine 76 lines the Zn(2+) pocket. Aspartate 78 is a catalytic residue. Aspartate 108 provides a ligand contact to Zn(2+). Residue glutamate 140 is part of the active site. 3 residues coordinate Zn(2+): glutamate 141, glutamate 165, and histidine 351.

The protein belongs to the peptidase M20A family. ArgE subfamily. In terms of assembly, homodimer. Requires Zn(2+) as cofactor. Co(2+) is required as a cofactor. It depends on glutathione as a cofactor.

Its subcellular location is the cytoplasm. The catalysed reaction is N(2)-acetyl-L-ornithine + H2O = L-ornithine + acetate. Its pathway is amino-acid biosynthesis; L-arginine biosynthesis; L-ornithine from N(2)-acetyl-L-ornithine (linear): step 1/1. Its function is as follows. Catalyzes the hydrolysis of the amide bond of N(2)-acetylated L-amino acids. Cleaves the acetyl group from N-acetyl-L-ornithine to form L-ornithine, an intermediate in L-arginine biosynthesis pathway, and a branchpoint in the synthesis of polyamines. In Vibrio vulnificus (strain CMCP6), this protein is Acetylornithine deacetylase.